An 826-amino-acid polypeptide reads, in one-letter code: Arf-GAP with ANK repeat and PH domain-containing protein cnt-1 (826 aa).

The PH domain occupies 275-373; that stretch reads DVMMEGYLYK…WMRALQRTIL (99 aa). The region spanning 447–572 is the Arf-GAP domain; the sequence is TTAFEQVRRV…RFAVAEDTRA (126 aa). The C4-type zinc-finger motif lies at 462–485; sequence CADCGSPAPKWVSINLGVVLCIEC. The disordered stretch occupies residues 570–604; sequence TRARSSATNRQEHLKHKTSIGGNSSSNGVNRSSSY. Residues 588-603 are compositionally biased toward low complexity; it reads SIGGNSSSNGVNRSSS. ANK repeat units follow at residues 690–719, 723–752, and 756–789; these read NGTT…KINM, KLNT…DSNL, and DSKT…NADF.

As to quaternary structure, interacts (via C-terminal ankyrin repeat) with rab-10 (GTP-bound form); the interaction is required for cnt-1 recruitment to endosomes. Interacts (via C-terminal ankyrin repeat) with rab-8 (GTP-bound form) and rab-35 (GTP-bound form). Post-translationally, cleaved by caspase ced-3 after Asp-382 and Asp-609. Cleavage at Asp-382 is required for subsequent cleavage at Asp-609.

It is found in the cytoplasm. The protein resides in the recycling endosome membrane. The protein localises to the basolateral cell membrane. Its subcellular location is the apical cell membrane. It localises to the cell membrane. Its function is as follows. GTPase-activating protein for the ADP ribosylation factor family. Regulates endosome recycling downstream of rab-10 and upstream of arf-6. In terms of biological role, promotes apoptosis during embryonic development. Produced by caspase ced-3-mediated cleavage, and translocates to the plasma membrane where it prevents the activation of the prosurvival Akt-1/2 and sgk-1 signaling pathway by competing with Akt-1/2 for the binding to PtdIns(3,4,5)P3. The sequence is that of Arf-GAP with ANK repeat and PH domain-containing protein cnt-1 from Caenorhabditis elegans.